Here is a 222-residue protein sequence, read N- to C-terminus: Vacuolar protein sorting-associated protein 2 homolog 2 (222 aa).

Coiled coils occupy residues 26–83 (RGIE…AQIR) and 143–222 (SEAI…LRRI). Residues 179–222 (SSAPKGRIATKTAAPPASTAATNKNSESSEVDELEKRLASLRRI) form a disordered region. Residues 187 to 203 (ATKTAAPPASTAATNKN) are compositionally biased toward low complexity.

The protein belongs to the SNF7 family. In terms of assembly, component of the endosomal sorting required for transport complex III (ESCRT-III), composed at least of VPS2, VPS20, VPS24 and VPS32. Interacts with CHMP1A, CHMP1B and VPS60-1.

It localises to the endosome. Functionally, component of the ESCRT-III complex, which is required for multivesicular bodies (MVBs) formation and sorting of endosomal cargo proteins into MVBs. The ESCRT-III complex is probably involved in the concentration of MVB cargo. The protein is Vacuolar protein sorting-associated protein 2 homolog 2 (VPS2.2) of Arabidopsis thaliana (Mouse-ear cress).